A 97-amino-acid polypeptide reads, in one-letter code: Aspartyl/glutamyl-tRNA(Asn/Gln) amidotransferase subunit C (97 aa).

It belongs to the GatC family. In terms of assembly, heterotrimer of A, B and C subunits.

The enzyme catalyses L-glutamyl-tRNA(Gln) + L-glutamine + ATP + H2O = L-glutaminyl-tRNA(Gln) + L-glutamate + ADP + phosphate + H(+). It catalyses the reaction L-aspartyl-tRNA(Asn) + L-glutamine + ATP + H2O = L-asparaginyl-tRNA(Asn) + L-glutamate + ADP + phosphate + 2 H(+). Allows the formation of correctly charged Asn-tRNA(Asn) or Gln-tRNA(Gln) through the transamidation of misacylated Asp-tRNA(Asn) or Glu-tRNA(Gln) in organisms which lack either or both of asparaginyl-tRNA or glutaminyl-tRNA synthetases. The reaction takes place in the presence of glutamine and ATP through an activated phospho-Asp-tRNA(Asn) or phospho-Glu-tRNA(Gln). This chain is Aspartyl/glutamyl-tRNA(Asn/Gln) amidotransferase subunit C, found in Prochlorococcus marinus (strain MIT 9215).